The chain runs to 318 residues: Tyrosine recombinase XerC (318 aa).

Residues 17-108 (PEVMAERRRW…GLRSFLRYLE (92 aa)) form the Core-binding (CB) domain. Residues 129–312 (SLPKALTDRE…DSARLLEIYD (184 aa)) form the Tyr recombinase domain. Residues Arg-172, Lys-196, His-264, Arg-267, and His-290 contribute to the active site. Tyr-299 serves as the catalytic O-(3'-phospho-DNA)-tyrosine intermediate.

The protein belongs to the 'phage' integrase family. XerC subfamily. Forms a cyclic heterotetrameric complex composed of two molecules of XerC and two molecules of XerD.

It is found in the cytoplasm. Its function is as follows. Site-specific tyrosine recombinase, which acts by catalyzing the cutting and rejoining of the recombining DNA molecules. The XerC-XerD complex is essential to convert dimers of the bacterial chromosome into monomers to permit their segregation at cell division. It also contributes to the segregational stability of plasmids. The sequence is that of Tyrosine recombinase XerC from Rhizobium meliloti (strain 1021) (Ensifer meliloti).